The sequence spans 344 residues: Arginine N-succinyltransferase (344 aa).

L125 contributes to the succinyl-CoA binding site. Catalysis depends on H229, which acts as the Proton donor.

The protein belongs to the arginine N-succinyltransferase family.

It carries out the reaction succinyl-CoA + L-arginine = N(2)-succinyl-L-arginine + CoA + H(+). It participates in amino-acid degradation; L-arginine degradation via AST pathway; L-glutamate and succinate from L-arginine: step 1/5. Its function is as follows. Catalyzes the transfer of succinyl-CoA to arginine to produce N(2)-succinylarginine. In Escherichia coli (strain 55989 / EAEC), this protein is Arginine N-succinyltransferase.